We begin with the raw amino-acid sequence, 265 residues long: Endochitinase At2g43580 (265 aa).

The first 24 residues, 1-24 (MALTKIFLILLLSLLGLYSETVKS), serve as a signal peptide directing secretion. Residues 25-59 (QNCDCAPNLCCSQFGYCGTTADYCGSTCQSGPCRV) form the Chitin-binding type-1 domain. 4 disulfides stabilise this stretch: C27/C35, C29/C41, C34/C48, and C52/C57. Residues 67-265 (GLVGNIVTQI…GLDPGANITC (199 aa)) form a catalytic region. The N-linked (GlcNAc...) asparagine glycan is linked to N102. The active-site Proton donor is E129. N262 is a glycosylation site (N-linked (GlcNAc...) asparagine).

Belongs to the glycosyl hydrolase 19 family. Chitinase class I subfamily.

It catalyses the reaction Random endo-hydrolysis of N-acetyl-beta-D-glucosaminide (1-&gt;4)-beta-linkages in chitin and chitodextrins.. The sequence is that of Endochitinase At2g43580 from Arabidopsis thaliana (Mouse-ear cress).